Consider the following 261-residue polypeptide: Large ribosomal subunit protein uL3 (261 aa).

Over residues 138–148 the composition is skewed to low complexity; it reads SVSHRSHGSTG. Disordered stretches follow at residues 138–163 and 214–261; these read SVSH…KKMA and ADAP…GDQA. An N5-methylglutamine modification is found at Q151. Over residues 227 to 261 the composition is skewed to low complexity; sequence APTPVEAAADEAAPAEEPAVTEAPAAEATEAGDQA.

The protein belongs to the universal ribosomal protein uL3 family. As to quaternary structure, part of the 50S ribosomal subunit. Forms a cluster with proteins L14 and L19. In terms of processing, methylated by PrmB.

One of the primary rRNA binding proteins, it binds directly near the 3'-end of the 23S rRNA, where it nucleates assembly of the 50S subunit. The polypeptide is Large ribosomal subunit protein uL3 (Phenylobacterium zucineum (strain HLK1)).